Here is a 1051-residue protein sequence, read N- to C-terminus: Integrin alpha-3 (1051 aa).

An N-terminal signal peptide occupies residues 1–32 (MGPGPRCAPGDPGWMLGALALMVAASGRFAFA). At 33-991 (FNLDTRFLVV…LVEELPAEIE (959 aa)) the chain is on the extracellular side. 7 FG-GAP repeats span residues 38–103 (RFLV…KDDC), 110–171 (EKSD…DLQL), 185–235 (CNSN…WDLS), 236–292 (EYSY…GGDL), 293–354 (KRKQ…TSFP), 356–411 (QPSL…GLLR), and 415–477 (QIVH…VARP). A glycan (N-linked (GlcNAc...) asparagine) is linked at Asn86. Disulfide bonds link Cys94–Cys103, Cys140–Cys162, and Cys185–Cys197. Positions 315, 317, 319, 323, 378, 380, 382, 386, 439, 441, 443, 445, and 447 each coordinate Ca(2+). Disulfide bonds link Cys485–Cys490 and Cys496–Cys550. Residues Asn500, Asn511, Asn573, and Asn605 are each glycosylated (N-linked (GlcNAc...) asparagine). Cys615 and Cys621 are disulfide-bonded. Asn656, Asn697, and Asn841 each carry an N-linked (GlcNAc...) asparagine glycan. Residues Cys694 and Cys702 are joined by a disulfide bond. 2 disulfide bridges follow: Cys846–Cys904 and Cys911–Cys916. Residues 860 to 888 (LSDPGDKPHSPQRRRRQLDPGGDQGSPPV) form a disordered region. N-linked (GlcNAc...) asparagine glycosylation is found at Asn923, Asn926, Asn935, and Asn969. The chain crosses the membrane as a helical span at residues 992–1019 (LWLVLVAVSAGLLLLGLIIILLWKCGFF). Positions 1017–1021 (GFFKR) match the GFFKR motif motif. Over 1020-1051 (KRARTRALYEAKRQKAEMKSQPSETERLTDDY) the chain is Cytoplasmic.

The protein belongs to the integrin alpha chain family. Heterodimer of an alpha and a beta subunit. The alpha subunit is composed of a heavy and a light chain linked by a disulfide bond. Alpha-3 associates with beta-1. Interacts with HPS5. Interacts with FAP (seprase); the interaction occurs at the cell surface of invadopodia membrane in a collagen-dependent manner. Isoform 1, but not isoform 2, is phosphorylated on serine residues.

The protein resides in the cell membrane. It localises to the cell projection. It is found in the invadopodium membrane. The protein localises to the filopodium membrane. In terms of biological role, integrin alpha-3/beta-1 is a receptor for fibronectin, laminin, collagen, epiligrin, thrombospondin and CSPG4. Integrin alpha-3/beta-1 provides a docking site for FAP (seprase) at invadopodia plasma membranes in a collagen-dependent manner and hence may participate in the adhesion, formation of invadopodia and matrix degradation processes, promoting cell invasion. Alpha-3/beta-1 may mediate with LGALS3 the stimulation by CSPG4 of endothelial cells migration. The protein is Integrin alpha-3 (ITGA3) of Cricetulus griseus (Chinese hamster).